A 201-amino-acid chain; its full sequence is Small ribosomal subunit protein uS10m (201 aa).

It belongs to the universal ribosomal protein uS10 family. Component of the mitochondrial small ribosomal subunit (mt-SSU). Mature mammalian 55S mitochondrial ribosomes consist of a small (28S) and a large (39S) subunit. The 28S small subunit contains a 12S ribosomal RNA (12S mt-rRNA) and 30 different proteins. The 39S large subunit contains a 16S rRNA (16S mt-rRNA), a copy of mitochondrial valine transfer RNA (mt-tRNA(Val)), which plays an integral structural role, and 52 different proteins.

It is found in the mitochondrion. This is Small ribosomal subunit protein uS10m (MRPS10) from Homo sapiens (Human).